The sequence spans 166 residues: 3-isopropylmalate dehydratase small subunit 1 (166 aa).

Belongs to the LeuD family. LeuD type 2 subfamily. Heterodimer of LeuC and LeuD.

It catalyses the reaction (2R,3S)-3-isopropylmalate = (2S)-2-isopropylmalate. It participates in amino-acid biosynthesis; L-leucine biosynthesis; L-leucine from 3-methyl-2-oxobutanoate: step 2/4. In terms of biological role, catalyzes the isomerization between 2-isopropylmalate and 3-isopropylmalate, via the formation of 2-isopropylmaleate. The sequence is that of 3-isopropylmalate dehydratase small subunit 1 (leuD1) from Thermotoga maritima (strain ATCC 43589 / DSM 3109 / JCM 10099 / NBRC 100826 / MSB8).